The sequence spans 290 residues: uncharacterized protein (290 aa).

Catalysis depends on lysine 203, which acts as the Schiff-base intermediate with substrate.

This sequence belongs to the DeoC/FbaB aldolase family.

This is an uncharacterized protein from Pasteurella multocida (strain Pm70).